Reading from the N-terminus, the 209-residue chain is Small ribosomal subunit protein uS4 (209 aa).

Residues 22-45 (RGRNPLLRKPNPPGQHGMQRKKKS) form a disordered region. Positions 93-154 (CRLDNIVYRL…KSKRLAIVTE (62 aa)) constitute an S4 RNA-binding domain.

The protein belongs to the universal ribosomal protein uS4 family. Part of the 30S ribosomal subunit. Contacts protein S5. The interaction surface between S4 and S5 is involved in control of translational fidelity.

One of the primary rRNA binding proteins, it binds directly to 16S rRNA where it nucleates assembly of the body of the 30S subunit. Functionally, with S5 and S12 plays an important role in translational accuracy. This is Small ribosomal subunit protein uS4 from Chlamydia trachomatis serovar A (strain ATCC VR-571B / DSM 19440 / HAR-13).